The sequence spans 393 residues: Elongation factor Tu (393 aa).

In terms of domain architecture, tr-type G spans lysine 10–valine 203. The tract at residues glycine 19–threonine 26 is G1. Position 19-26 (glycine 19–threonine 26) interacts with GTP. Threonine 26 lines the Mg(2+) pocket. Residues glycine 60 to serine 64 form a G2 region. Residues aspartate 81–glycine 84 are G3. GTP contacts are provided by residues aspartate 81–histidine 85 and asparagine 136–aspartate 139. Residues asparagine 136 to aspartate 139 are G4. The tract at residues serine 173–leucine 175 is G5.

It belongs to the TRAFAC class translation factor GTPase superfamily. Classic translation factor GTPase family. EF-Tu/EF-1A subfamily. As to quaternary structure, monomer.

It is found in the cytoplasm. It carries out the reaction GTP + H2O = GDP + phosphate + H(+). Functionally, GTP hydrolase that promotes the GTP-dependent binding of aminoacyl-tRNA to the A-site of ribosomes during protein biosynthesis. The chain is Elongation factor Tu from Chlorobium limicola (strain DSM 245 / NBRC 103803 / 6330).